The primary structure comprises 82 residues: Small ribosomal subunit protein bTHXm (82 aa).

The N-terminal 22 residues, 1–22 (MAMRLAAAAAFVRRLVPARNPV), are a transit peptide targeting the mitochondrion. A disordered region spans residues 34 to 56 (RGDKKTKRGKRFKGSYGNARPKR). The span at 37 to 46 (KKTKRGKRFK) shows a compositional bias: basic residues.

This sequence belongs to the bacterial ribosomal protein bTHX family.

The protein resides in the mitochondrion. This Oryza sativa subsp. japonica (Rice) protein is Small ribosomal subunit protein bTHXm.